The following is a 400-amino-acid chain: Tryptophan synthase beta chain (400 aa).

Lys-91 is modified (N6-(pyridoxal phosphate)lysine).

Belongs to the TrpB family. Tetramer of two alpha and two beta chains. Pyridoxal 5'-phosphate serves as cofactor.

It carries out the reaction (1S,2R)-1-C-(indol-3-yl)glycerol 3-phosphate + L-serine = D-glyceraldehyde 3-phosphate + L-tryptophan + H2O. It participates in amino-acid biosynthesis; L-tryptophan biosynthesis; L-tryptophan from chorismate: step 5/5. The beta subunit is responsible for the synthesis of L-tryptophan from indole and L-serine. The protein is Tryptophan synthase beta chain of Listeria monocytogenes serotype 4a (strain HCC23).